We begin with the raw amino-acid sequence, 279 residues long: DegV domain-containing protein SA1258 (279 aa).

The DegV domain maps to Gln4–Lys278. Positions 61 and 93 each coordinate hexadecanoate.

May bind long-chain fatty acids, such as palmitate, and may play a role in lipid transport or fatty acid metabolism. The sequence is that of DegV domain-containing protein SA1258 from Staphylococcus aureus (strain N315).